Reading from the N-terminus, the 587-residue chain is MFS-type transporter opaD (587 aa).

Helical transmembrane passes span 87–107 (VAIM…NTIL), 124–146 (MGWY…GKLL), 153–173 (WVYI…GVSP), 184–204 (ISGT…TIIV), 214–234 (GILS…GGAF), 242–262 (WCFY…LLLF), 284–304 (IIGL…LQWG), 315–335 (IIAL…VEYW), and 357–377 (LFTF…PIWF). Residue N382 is glycosylated (N-linked (GlcNAc...) asparagine). The next 5 helical transmembrane spans lie at 393 to 413 (IPLI…VTTL), 414 to 434 (GYYI…AGLL), 447 to 467 (IGFQ…PLVV), 483 to 503 (LVTL…QSVF), and 554 to 574 (VYLV…PIRW).

The protein belongs to the major facilitator superfamily. TCR/Tet family.

Its subcellular location is the membrane. Functionally, MFS-type transporter; part of the gene cluster that mediates the biosynthesis of oxepinamides, derivatives of anthranilyl-containing tripeptides that share an oxepin ring and a fused pyrimidinone moiety. This Aspergillus ustus protein is MFS-type transporter opaD.